Reading from the N-terminus, the 288-residue chain is Mortality factor 4-like protein 2 (288 aa).

Positions 1–15 are enriched in polar residues; the sequence is MSSRKQGSQPRGQQS. Residues 1 to 113 are disordered; that stretch reads MSSRKQGSQP…RADPTVESEE (113 aa). Phosphoserine is present on serine 71. The MRG domain maps to 117–288; sequence NRMEVKVKIP…ASAEYHRKAL (172 aa).

In terms of assembly, component of the NuA4 histone acetyltransferase complex which contains the catalytic subunit KAT5/TIP60 and the subunits EP400, TRRAP/PAF400, BRD8/SMAP, EPC1, DMAP1/DNMAP1, RUVBL1/TIP49, RUVBL2, ING3, actin, ACTL6A/BAF53A, MORF4L1/MRG15, MORF4L2/MRGX, MRGBP, YEATS4/GAS41 and VPS72/YL1. The NuA4 complex interacts with MYC and the adenovirus E1A protein. MORF4L1 may also participate in the formation of NuA4 related complexes which lack the KAT5/TIP60 catalytic subunit, but which include the SWI/SNF related protein SRCAP. Component of the MSIN3A histone deacetylase complex, which includes SIN3A, HDAC2, ARID4B, MORF4L1, RBBP4/RbAp48, and RBBP7/RbAp46. Interacts with MRFAP1 and RB1. May also interact with one or more as yet undefined members of the TLE (transducin-like enhancer of split) family of transcriptional repressors.

It localises to the nucleus. Component of the NuA4 histone acetyltransferase complex which is involved in transcriptional activation of select genes principally by acetylation of nucleosomal histone H4 and H2A. This modification may both alter nucleosome - DNA interactions and promote interaction of the modified histones with other proteins which positively regulate transcription. This complex may be required for the activation of transcriptional programs associated with oncogene and proto-oncogene mediated growth induction, tumor suppressor mediated growth arrest and replicative senescence, apoptosis, and DNA repair. The NuA4 complex ATPase and helicase activities seem to be, at least in part, contributed by the association of RUVBL1 and RUVBL2 with EP400. NuA4 may also play a direct role in DNA repair when directly recruited to sites of DNA damage. Also a component of the MSIN3A complex which acts to repress transcription by deacetylation of nucleosomal histones. This is Mortality factor 4-like protein 2 (MORF4L2) from Homo sapiens (Human).